A 550-amino-acid polypeptide reads, in one-letter code: Arginine--tRNA ligase (550 aa).

Positions 130 to 140 (ANPTGPIHLGG) match the 'HIGH' region motif.

This sequence belongs to the class-I aminoacyl-tRNA synthetase family. Monomer.

The protein localises to the cytoplasm. The enzyme catalyses tRNA(Arg) + L-arginine + ATP = L-arginyl-tRNA(Arg) + AMP + diphosphate. The polypeptide is Arginine--tRNA ligase (Rhodococcus erythropolis (strain PR4 / NBRC 100887)).